The sequence spans 316 residues: UDP-N-acetylenolpyruvoylglucosamine reductase (316 aa).

An FAD-binding PCMH-type domain is found at Val27–Lys225. Arg190 is a catalytic residue. Ser239 (proton donor) is an active-site residue. Glu309 is a catalytic residue.

The protein belongs to the MurB family. The cofactor is FAD.

The protein localises to the cytoplasm. The catalysed reaction is UDP-N-acetyl-alpha-D-muramate + NADP(+) = UDP-N-acetyl-3-O-(1-carboxyvinyl)-alpha-D-glucosamine + NADPH + H(+). It participates in cell wall biogenesis; peptidoglycan biosynthesis. Cell wall formation. The chain is UDP-N-acetylenolpyruvoylglucosamine reductase from Coxiella burnetii (strain CbuG_Q212) (Coxiella burnetii (strain Q212)).